A 266-amino-acid chain; its full sequence is uncharacterized protein (266 aa).

The helical transmembrane segment at 12-28 threads the bilayer; it reads ILAAGLAIGCAGGYYAY. The FAD-binding FR-type domain occupies 40 to 140; that stretch reads EIYAPFTVNK…RGPFKTTKLD (101 aa).

It belongs to the flavoprotein pyridine nucleotide cytochrome reductase family. The cofactor is FAD.

Its subcellular location is the mitochondrion outer membrane. This is an uncharacterized protein from Schizosaccharomyces pombe (strain 972 / ATCC 24843) (Fission yeast).